The following is a 393-amino-acid chain: Protein FAM53C (393 aa).

An N-acetylmethionine modification is found at M1. Residues 77-120 form a disordered region; it reads HLRPPSRGNSPKEPPLSQVLSPEPPDPEKLPVPPAPPSKRHCRS. S122 and S162 each carry phosphoserine. 2 disordered regions span residues 141–167 and 204–283; these read LWTPIKHRGNAGGGGPQVPQQSPPKRV and QPCA…ARKT. Residues 204-215 show a composition bias toward polar residues; sequence QPCATSPQSGSW. Residues S232, S234, S255, S273, and S299 each carry the phosphoserine modification. A compositionally biased stretch (low complexity) spans 241–256; the sequence is ASRFLPSARSSPASSP. The segment covering 343-355 has biased composition (low complexity); sequence SCSPVEGSSQVLS. A disordered region spans residues 343–365; the sequence is SCSPVEGSSQVLSESEEEEEGSV.

Belongs to the FAM53 family.

The sequence is that of Protein FAM53C from Mus musculus (Mouse).